Here is a 320-residue protein sequence, read N- to C-terminus: Thymidine kinase (320 aa).

ATP is bound at residue 10 to 17 (GAYDTGKS). Residue Glu-33 is the Proton acceptor of the active site. Residues Tyr-51 and Gln-75 each coordinate substrate. Arg-162 serves as a coordination point for ATP. Arg-168 contacts substrate.

It belongs to the herpesviridae thymidine kinase family. Homodimer.

It catalyses the reaction thymidine + ATP = dTMP + ADP + H(+). Its function is as follows. Catalyzes the transfer of the gamma-phospho group of ATP to thymidine to generate dTMP in the salvage pathway of pyrimidine synthesis. The dTMP serves as a substrate for DNA polymerase during viral DNA replication. Allows the virus to be reactivated and to grow in non-proliferative cells lacking a high concentration of phosphorylated nucleic acid precursors. This Suid herpesvirus 1 (strain NIA-3) (SuHV-1) protein is Thymidine kinase.